The sequence spans 619 residues: Protein CPn_1016/CP_0837/CPj1016/CpB1054 (619 aa).

Residues 591-619 (NAKKSEEQTSPQETPEVIRVSYPTTTSAL) form a disordered region.

Belongs to the chlamydial CPn_1016/CT_858/TC_0248 family.

The protein is Protein CPn_1016/CP_0837/CPj1016/CpB1054 of Chlamydia pneumoniae (Chlamydophila pneumoniae).